A 759-amino-acid polypeptide reads, in one-letter code: Tripartite motif-containing protein 46 (759 aa).

The segment at 1–166 is required for proximal axon localization, axon formation and migration; that stretch reads MAEGEDMQTF…VERYRQSVSV (166 aa). The RING-type 1; degenerate zinc-finger motif lies at 33-59; it reads CPVCQEMYKQPLVLPCTHNVCQACARE. The disordered stretch occupies residues 67–98; the sequence is IGHGGDPSSEPTSPASTPSTRSPRLSRRTLPK. Residues 73–89 are compositionally biased toward low complexity; it reads PSSEPTSPASTPSTRSP. Residues 172–231 form an RING-type 2; degenerate zinc finger; the sequence is CQLCKPPPLEATKGCTECRATFCNECFKLFHPWGTQKAQHEPTLPTLSFRPKGLMCPDHK. The B box-type zinc finger occupies 222-263; sequence PKGLMCPDHKEEVTHYCKTCQRLVCQLCRVRRTHSGHKITPV. Residues C227, H230, C249, and H255 each coordinate Zn(2+). Residues 322–400 adopt a coiled-coil conformation; the sequence is AVLEEKRASL…RATEALQTFR (79 aa). A Phosphoserine modification is found at S330. The 58-residue stretch at 370-427 folds into the COS domain; the sequence is LKETDQPCFVQAAKQLHNRIARATEALQTFRPAASSSFRHCQLDVGREMKLLTELSFL. Residues 411 to 429 are required for microtubule association, proximal axon localization and axon formation; sequence QLDVGREMKLLTELSFLRV. A Fibronectin type-III domain is found at 429 to 528; the sequence is VPEAPVIDTQ…EDVHLHTPPA (100 aa). Residues 526–747 form the B30.2/SPRY domain; it reads PPAPVLHFFL…LQEPVGTKPE (222 aa). Position 627 is a phosphoserine (S627).

The protein belongs to the TRIM/RBCC family. Interacts with TUBB3 and TUBA4A. In terms of tissue distribution, expressed in the central nervous system, including pyramidal neurons and interneurons in the cortex and hippocampus and all neuronal cell types in the cerebral and cerebellar cortex, and in the peripheral nervous system, including the dorsal root ganglion neurons.

It is found in the cell projection. The protein resides in the axon. Its subcellular location is the cytoplasm. It localises to the cytoskeleton. Microtubule-associated protein that is involved in the formation of parallel microtubule bundles linked by cross-bridges in the proximal axon. Required for the uniform orientation and maintenance of the parallel microtubule fascicles, which are important for efficient cargo delivery and trafficking in axons. Thereby also required for proper axon formation, the establishment of neuronal polarity and proper neuronal migration. In Mus musculus (Mouse), this protein is Tripartite motif-containing protein 46 (Trim46).